We begin with the raw amino-acid sequence, 81 residues long: Defensin-like protein 130 (81 aa).

An N-terminal signal peptide occupies residues 1-21 (MTKNTSLTIFMVVLVIGMLYT). 4 cysteine pairs are disulfide-bonded: C32–C81, C41–C63, C46–C75, and C50–C77.

Belongs to the DEFL family.

It is found in the secreted. The chain is Defensin-like protein 130 (LCR28) from Arabidopsis thaliana (Mouse-ear cress).